Here is a 310-residue protein sequence, read N- to C-terminus: Methionyl-tRNA formyltransferase (310 aa).

A (6S)-5,6,7,8-tetrahydrofolate-binding site is contributed by 110-113 (SLLP).

It belongs to the Fmt family.

The catalysed reaction is L-methionyl-tRNA(fMet) + (6R)-10-formyltetrahydrofolate = N-formyl-L-methionyl-tRNA(fMet) + (6S)-5,6,7,8-tetrahydrofolate + H(+). Its function is as follows. Attaches a formyl group to the free amino group of methionyl-tRNA(fMet). The formyl group appears to play a dual role in the initiator identity of N-formylmethionyl-tRNA by promoting its recognition by IF2 and preventing the misappropriation of this tRNA by the elongation apparatus. This Streptomyces coelicolor (strain ATCC BAA-471 / A3(2) / M145) protein is Methionyl-tRNA formyltransferase.